Consider the following 266-residue polypeptide: Phosphatidylglycerol--prolipoprotein diacylglyceryl transferase (266 aa).

The next 7 helical transmembrane spans lie at 10-30, 56-76, 92-112, 120-140, 171-191, 199-219, and 233-253; these read VALAIGPLKIHWYGLMYLIGI, LVFWVACGVILGGRLGYVLFY, WKGGMSFHGGLLGVMLAVWWF, FFQLMDFIAPLVPIGLGAGRI, PSQLYQFALEGVALFVILWLF, ASVSGLFVLCYGIFRFVVEFV, and WLTMGQVLCVPMVLAGIALMV. Residue R139 participates in a 1,2-diacyl-sn-glycero-3-phospho-(1'-sn-glycerol) binding.

It belongs to the Lgt family.

It is found in the cell inner membrane. The catalysed reaction is L-cysteinyl-[prolipoprotein] + a 1,2-diacyl-sn-glycero-3-phospho-(1'-sn-glycerol) = an S-1,2-diacyl-sn-glyceryl-L-cysteinyl-[prolipoprotein] + sn-glycerol 1-phosphate + H(+). It participates in protein modification; lipoprotein biosynthesis (diacylglyceryl transfer). Functionally, catalyzes the transfer of the diacylglyceryl group from phosphatidylglycerol to the sulfhydryl group of the N-terminal cysteine of a prolipoprotein, the first step in the formation of mature lipoproteins. This Pseudomonas paraeruginosa (strain DSM 24068 / PA7) (Pseudomonas aeruginosa (strain PA7)) protein is Phosphatidylglycerol--prolipoprotein diacylglyceryl transferase.